A 495-amino-acid chain; its full sequence is Lysine--tRNA ligase (495 aa).

Residues Glu-406 and Glu-413 each coordinate Mg(2+).

This sequence belongs to the class-II aminoacyl-tRNA synthetase family. Homodimer. The cofactor is Mg(2+).

Its subcellular location is the cytoplasm. The enzyme catalyses tRNA(Lys) + L-lysine + ATP = L-lysyl-tRNA(Lys) + AMP + diphosphate. The protein is Lysine--tRNA ligase of Staphylococcus aureus (strain COL).